A 314-amino-acid polypeptide reads, in one-letter code: tRNA pseudouridine synthase B (314 aa).

Residue histidine 43 coordinates substrate. Catalysis depends on aspartate 48, which acts as the Nucleophile. Substrate-binding residues include tyrosine 76, tyrosine 179, and leucine 200.

Belongs to the pseudouridine synthase TruB family. Type 1 subfamily.

It catalyses the reaction uridine(55) in tRNA = pseudouridine(55) in tRNA. Responsible for synthesis of pseudouridine from uracil-55 in the psi GC loop of transfer RNAs. In Shigella dysenteriae serotype 1 (strain Sd197), this protein is tRNA pseudouridine synthase B.